Consider the following 289-residue polypeptide: 4-hydroxybenzoate octaprenyltransferase (289 aa).

A run of 8 helical transmembrane segments spans residues 21 to 40 (PIGT…LAAG), 95 to 115 (VLAL…TMNS), 116 to 136 (LTIA…FMKR), 138 to 158 (IPIP…MAYA), 161 to 181 (ANAL…WTIA), 213 to 233 (IIGV…QLMG), 236 to 256 (AWYY…QRLI), and 268 to 288 (FLNN…NYLL).

This sequence belongs to the UbiA prenyltransferase family. Mg(2+) serves as cofactor.

The protein resides in the cell inner membrane. The enzyme catalyses all-trans-octaprenyl diphosphate + 4-hydroxybenzoate = 4-hydroxy-3-(all-trans-octaprenyl)benzoate + diphosphate. It functions in the pathway cofactor biosynthesis; ubiquinone biosynthesis. In terms of biological role, catalyzes the prenylation of para-hydroxybenzoate (PHB) with an all-trans polyprenyl group. Mediates the second step in the final reaction sequence of ubiquinone-8 (UQ-8) biosynthesis, which is the condensation of the polyisoprenoid side chain with PHB, generating the first membrane-bound Q intermediate 3-octaprenyl-4-hydroxybenzoate. This is 4-hydroxybenzoate octaprenyltransferase from Aeromonas salmonicida (strain A449).